Here is a 99-residue protein sequence, read N- to C-terminus: Large ribosomal subunit protein uL23 (99 aa).

It belongs to the universal ribosomal protein uL23 family. In terms of assembly, part of the 50S ribosomal subunit. Contacts protein L29, and trigger factor when it is bound to the ribosome.

Functionally, one of the early assembly proteins it binds 23S rRNA. One of the proteins that surrounds the polypeptide exit tunnel on the outside of the ribosome. Forms the main docking site for trigger factor binding to the ribosome. In Clavibacter michiganensis subsp. michiganensis (strain NCPPB 382), this protein is Large ribosomal subunit protein uL23.